A 152-amino-acid polypeptide reads, in one-letter code: Small ribosomal subunit protein uS11B (152 aa).

Residues 131–152 (EDVTPIPSDSTRRKGGRRGRRL) are disordered. The segment covering 143-152 (RKGGRRGRRL) has biased composition (basic residues).

The protein belongs to the universal ribosomal protein uS11 family.

The protein is Small ribosomal subunit protein uS11B of Anopheles gambiae (African malaria mosquito).